Reading from the N-terminus, the 808-residue chain is MTISPSKPKSSDVKQDKSAPLSTEELYQINAYWRACNYLALGMIYLQDNPLLKQPLKPGHIKNRLLGHWGSSPGLSFIYVHLNRLIKKYDLDVIYIAGPGHGAPGILGPTYLEGTYSEVYPDKSEDEEGMLKFFKQFSFPGGIGSHCTPETPGSIHEGGELGYSLSHAYGAAFDNPDLIVTAVIGDGEAETGPLATAWHSNKFINPIRDGAVLPILHLNGYKIANPTILARISHEELEDLFKGYGYTPYFVEGHDPAQVHQLMAATLETVILEIKKIQTEARTSGVAKRPRWPMIVLRTPKGWTAPAEIDGHKLEGFWRSHQVPITDVATNPDHLKILEQWMKSYKPEELFDEHGSLIPELKELAPIGHRRISANPVANGGILRKELRLSDFRNNAVEVSKPGAVEVENTKPLGNFLRDIMRNNMTNFRIFGPDETASNRLSAVYEVSEKTWLADILPEDADGSELSTDGRVMEMLSEHNLFGWLEGYLLSGRHGLFHSYEAFAHIVDSMFNQHAKWLEISKNEVAWRSPISSENILLSSTVWRQDNNGFSHQDPGFIDLVTNKSANVTRIYLPPDANCLLSVADHCLRSTNYVNVIVADKQKHLQFLSIEEAIAHCTKGIGIWDWASNDHHGQEPDLPDVIMASCGDVVTMEALAATAILRDEFPDLKVRFINVVDLYKLQPDTEHPHGLSDWDFDSLFTTDKPVIFNFHGYPWLIHKLAYRRTNHENIHVRGYKEKGSINTPLELAINNQVDRFNLVIDVIDRVPKLGSAAVYVRERMKKEIINNRNYAHKHGIDQPEILNWKWPY.

Belongs to the XFP family. The cofactor is thiamine diphosphate.

This is Probable phosphoketolase 1 from Nostoc sp. (strain PCC 7120 / SAG 25.82 / UTEX 2576).